The sequence spans 394 residues: Elongation factor Tu (394 aa).

Residues 10 to 204 (KPHVNVGTIG…ALDSYIPEPQ (195 aa)) form the tr-type G domain. Residues 19-26 (GHVDHGKT) form a G1 region. Position 19–26 (19–26 (GHVDHGKT)) interacts with GTP. Position 26 (Thr26) interacts with Mg(2+). Positions 60 to 64 (GITIN) are G2. Residues 81-84 (DCPG) are G3. GTP is bound by residues 81–85 (DCPGH) and 136–139 (NKCD). The tract at residues 136–139 (NKCD) is G4. The G5 stretch occupies residues 174–176 (SAL).

The protein belongs to the TRAFAC class translation factor GTPase superfamily. Classic translation factor GTPase family. EF-Tu/EF-1A subfamily. As to quaternary structure, monomer.

It localises to the cytoplasm. The enzyme catalyses GTP + H2O = GDP + phosphate + H(+). GTP hydrolase that promotes the GTP-dependent binding of aminoacyl-tRNA to the A-site of ribosomes during protein biosynthesis. The chain is Elongation factor Tu from Shewanella baltica (strain OS185).